The sequence spans 434 residues: Glutamyl-tRNA reductase (434 aa).

Substrate contacts are provided by residues 52 to 55 (TCNR), Ser115, 120 to 122 (ETQ), and Gln126. The active-site Nucleophile is Cys53. 195-200 (GAGEMI) contributes to the NADP(+) binding site.

This sequence belongs to the glutamyl-tRNA reductase family. In terms of assembly, homodimer.

The catalysed reaction is (S)-4-amino-5-oxopentanoate + tRNA(Glu) + NADP(+) = L-glutamyl-tRNA(Glu) + NADPH + H(+). It functions in the pathway porphyrin-containing compound metabolism; protoporphyrin-IX biosynthesis; 5-aminolevulinate from L-glutamyl-tRNA(Glu): step 1/2. Catalyzes the NADPH-dependent reduction of glutamyl-tRNA(Glu) to glutamate 1-semialdehyde (GSA). In Cupriavidus metallidurans (strain ATCC 43123 / DSM 2839 / NBRC 102507 / CH34) (Ralstonia metallidurans), this protein is Glutamyl-tRNA reductase.